The chain runs to 313 residues: Aspartate carbamoyltransferase catalytic subunit (313 aa).

Carbamoyl phosphate is bound by residues R66 and T67. K94 contacts L-aspartate. R116, H144, and Q147 together coordinate carbamoyl phosphate. R177 and R231 together coordinate L-aspartate. 2 residues coordinate carbamoyl phosphate: G272 and P273.

This sequence belongs to the aspartate/ornithine carbamoyltransferase superfamily. ATCase family. In terms of assembly, heterododecamer (2C3:3R2) of six catalytic PyrB chains organized as two trimers (C3), and six regulatory PyrI chains organized as three dimers (R2).

The catalysed reaction is carbamoyl phosphate + L-aspartate = N-carbamoyl-L-aspartate + phosphate + H(+). It participates in pyrimidine metabolism; UMP biosynthesis via de novo pathway; (S)-dihydroorotate from bicarbonate: step 2/3. Functionally, catalyzes the condensation of carbamoyl phosphate and aspartate to form carbamoyl aspartate and inorganic phosphate, the committed step in the de novo pyrimidine nucleotide biosynthesis pathway. The protein is Aspartate carbamoyltransferase catalytic subunit of Pelagibacter ubique (strain HTCC1062).